Consider the following 328-residue polypeptide: Biotin synthase (328 aa).

Residues 50–277 (FGDQVHLCCI…GKEIVICGGR (228 aa)) enclose the Radical SAM core domain. [4Fe-4S] cluster is bound by residues cysteine 67, cysteine 71, and cysteine 74. Positions 111, 142, and 202 each coordinate [2Fe-2S] cluster.

This sequence belongs to the radical SAM superfamily. Biotin synthase family. In terms of assembly, homodimer. The cofactor is [4Fe-4S] cluster. It depends on [2Fe-2S] cluster as a cofactor.

It carries out the reaction (4R,5S)-dethiobiotin + (sulfur carrier)-SH + 2 reduced [2Fe-2S]-[ferredoxin] + 2 S-adenosyl-L-methionine = (sulfur carrier)-H + biotin + 2 5'-deoxyadenosine + 2 L-methionine + 2 oxidized [2Fe-2S]-[ferredoxin]. It participates in cofactor biosynthesis; biotin biosynthesis; biotin from 7,8-diaminononanoate: step 2/2. Catalyzes the conversion of dethiobiotin (DTB) to biotin by the insertion of a sulfur atom into dethiobiotin via a radical-based mechanism. The polypeptide is Biotin synthase (Desulfatibacillum aliphaticivorans).